The chain runs to 363 residues: Histidinol-phosphate aminotransferase (363 aa).

K218 bears the N6-(pyridoxal phosphate)lysine mark.

It belongs to the class-II pyridoxal-phosphate-dependent aminotransferase family. Histidinol-phosphate aminotransferase subfamily. As to quaternary structure, homodimer. Pyridoxal 5'-phosphate is required as a cofactor.

It catalyses the reaction L-histidinol phosphate + 2-oxoglutarate = 3-(imidazol-4-yl)-2-oxopropyl phosphate + L-glutamate. Its pathway is amino-acid biosynthesis; L-histidine biosynthesis; L-histidine from 5-phospho-alpha-D-ribose 1-diphosphate: step 7/9. The sequence is that of Histidinol-phosphate aminotransferase from Xanthomonas axonopodis pv. citri (strain 306).